Here is a 548-residue protein sequence, read N- to C-terminus: Calcium-transporting ATPase (548 aa).

A signal peptide spans 1 to 21 (MNFKSTVITAMCCFFSFAVLA). A divalent metal cation-binding residues include Asp-37 and Thr-78. Thr-78 (phosphothreonine intermediate) is an active-site residue. Residues Asn-99 and 160-162 (KDR) contribute to the substrate site. An ATP-binding motif is present at residues 179 to 187 (DGKTGDWIT). 5 residues coordinate a divalent metal cation: Asp-305, His-309, Asp-352, His-353, and His-488.

The cofactor is Mg(2+).

The protein localises to the cell inner membrane. It carries out the reaction Ca(2+)(in) + ATP + H2O = Ca(2+)(out) + ADP + phosphate + H(+). With respect to regulation, completely inhibited by vanadate(3-). Also inhibited by lanthanoid atom and phosphate. Not inhibited by N-ethylmaleimide, 1,3-dicyclohexylcarbodiimide, oligomycin, ouabain, valinomycin, nigericin, thapsigargin, cyclopiazonic acid or fluorescein isothiocyanate. In terms of biological role, catalyzes the hydrolysis of ATP coupled with the transport of calcium. Has some hydrolysis activity also with dATP, GTP, UTP, ITP and 4-nitrophenyl phosphate as substrate. No activity with ADP, CTP, acetyl dihydrogen phosphate or AMP-PNP as substrate. This Myroides odoratus (Flavobacterium odoratum) protein is Calcium-transporting ATPase.